Consider the following 218-residue polypeptide: Vacuolar protein-sorting-associated protein 37 homolog 2 (218 aa).

Positions 1-51 are disordered; sequence MFNFWGSKEQQQGQSRPSPEASATPWYSPSLVTSPSSSRPQTSGQIPSHVS. Over residues 8-17 the composition is skewed to polar residues; that stretch reads KEQQQGQSRP. The segment covering 28 to 40 has biased composition (low complexity); it reads SPSLVTSPSSSRP. Residues 137–218 enclose the VPS37 C-terminal domain; the sequence is QEKLNELENQ…HLAAKTSSIG (82 aa).

Belongs to the VPS37 family. Component of the endosomal sorting required for transport complex I (ESCRT-I), composed of ELC, VPS28 and VPS37. Interacts with ELC.

It localises to the endosome. In terms of biological role, component of the ESCRT-I complex (endosomal sorting complex required for transport I), a regulator of vesicular trafficking process. Required for the sorting of endocytic ubiquitinated cargos into multivesicular bodies (MVBs). This is Vacuolar protein-sorting-associated protein 37 homolog 2 (VPS37-2) from Arabidopsis thaliana (Mouse-ear cress).